The sequence spans 330 residues: MSFQTNYIHLADEILSGKTSISYEQALEILNSDENWWEIYAAALYLKNQVSRNNIRLNVLLSAKQGLCAENCGYCSQSKESTADIDKFGLLPQNVILKQAIVAHQNGASVFCIAMSGTKPSKREIEQLCQVIPEIKKSLPLEICLTAGFLDREQLHQLKQAGIDRINHNLNTPEENYPNIATTHSFKDRCDTLERIHNEDIDVCSGFICGMGESDEGLITLAFRLKELDPYSIPVNFLLAVEGTPLGKYNYLTPIKCLKIMAMLRFVFPFKELRLSAGREVHFENFESLVTLLVDSTFLGNYLTEGGRNQHTDIEFLEKLQLNHTKKELI.

The Radical SAM core domain occupies 53–276 (NNIRLNVLLS…VFPFKELRLS (224 aa)). Positions 68, 72, and 75 each coordinate [4Fe-4S] cluster. Residues Cys-112, Cys-144, Cys-204, and Arg-274 each coordinate [2Fe-2S] cluster.

The protein belongs to the radical SAM superfamily. Biotin synthase family. Homodimer. The cofactor is [4Fe-4S] cluster. [2Fe-2S] cluster is required as a cofactor.

It catalyses the reaction (4R,5S)-dethiobiotin + (sulfur carrier)-SH + 2 reduced [2Fe-2S]-[ferredoxin] + 2 S-adenosyl-L-methionine = (sulfur carrier)-H + biotin + 2 5'-deoxyadenosine + 2 L-methionine + 2 oxidized [2Fe-2S]-[ferredoxin]. It participates in cofactor biosynthesis; biotin biosynthesis; biotin from 7,8-diaminononanoate: step 2/2. In terms of biological role, catalyzes the conversion of dethiobiotin (DTB) to biotin by the insertion of a sulfur atom into dethiobiotin via a radical-based mechanism. This is Biotin synthase from Streptococcus agalactiae serotype V (strain ATCC BAA-611 / 2603 V/R).